The chain runs to 274 residues: MLSVAARSGPFAPVLSATSRGVAGALRPLVQATVPATPKPPVLDLKRPFLSRESLSGQAVRRPLVASVGLNVPASVCYSHTDVKVPDFYDYRRLEVLDSTKSSRESSEARKGFSYLVTAVTTVGVAYAAKNAVTQFISSMSASADVLAMAKIEINLSDIPEGKNMAFKWRGKPLFVRHRTQKEIEQEAAVELSQLRDPQHDLDRVKKPEWVILIGICTHLGCVPIANAGDFGGYYCPCHGSHYDVSGRIRLGPAPLNLEVPPYEFTSDDMVVVG.

The Mitochondrial matrix portion of the chain corresponds to 79 to 103 (SHTDVKVPDFYDYRRLEVLDSTKSS). A helical membrane pass occupies residues 104–140 (RESSEARKGFSYLVTAVTTVGVAYAAKNAVTQFISSM). Over 141 to 274 (SASADVLAMA…FTSDDMVVVG (134 aa)) the chain is Mitochondrial intermembrane. Positions 187-272 (EAAVELSQLR…YEFTSDDMVV (86 aa)) constitute a Rieske domain. [2Fe-2S] cluster is bound by residues Cys217, His219, Cys236, His239, and Ser241. A disulfide bond links Cys222 and Cys238.

The protein belongs to the Rieske iron-sulfur protein family. Component of the ubiquinol-cytochrome c oxidoreductase (cytochrome b-c1 complex, complex III, CIII), a multisubunit enzyme composed of 11 subunits. The complex is composed of 3 respiratory subunits cytochrome b, cytochrome c1 and Rieske protein UQCRFS1, 2 core protein subunits UQCRC1/QCR1 and UQCRC2/QCR2, and 6 low-molecular weight protein subunits UQCRH/QCR6, UQCRB/QCR7, UQCRQ/QCR8, UQCR10/QCR9, UQCR11/QCR10 and subunit 9, the cleavage product of Rieske protein UQCRFS1. The complex exists as an obligatory dimer and forms supercomplexes (SCs) in the inner mitochondrial membrane with NADH-ubiquinone oxidoreductase (complex I, CI) and cytochrome c oxidase (complex IV, CIV), resulting in different assemblies (supercomplex SCI(1)III(2)IV(1) and megacomplex MCI(2)III(2)IV(2)). Incorporation of the Rieske protein UQCRFS1 is the penultimate step in complex III assembly. Interacts with TTC19, which is involved in the clearance of UQCRFS1 fragments. As to quaternary structure, component of the ubiquinol-cytochrome c oxidoreductase (cytochrome b-c1 complex, complex III, CIII). Subunit 9 corresponds to the mitochondrial targeting sequence (MTS) of Rieske protein UQCRFS1. It is retained after processing and incorporated inside complex III, where it remains bound to the complex and localizes between the 2 core subunits UQCRC1/QCR1 and UQCRC2/QCR2. Requires [2Fe-2S] cluster as cofactor. Proteolytic processing is necessary for the correct insertion of UQCRFS1 in the complex III dimer. Several fragments are generated during UQCRFS1 insertion, most probably due to the endogenous matrix-processing peptidase (MPP) activity of the 2 core protein subunits UQCRC1/QCR1 and UQCRC2/QCR2, which are homologous to the 2 mitochondrial-processing peptidase (MPP) subunits beta-MPP and alpha-MPP respectively. The action of the protease is also necessary for the clearance of the UQCRFS1 fragments.

It localises to the mitochondrion inner membrane. The enzyme catalyses a quinol + 2 Fe(III)-[cytochrome c](out) = a quinone + 2 Fe(II)-[cytochrome c](out) + 2 H(+)(out). Functionally, component of the ubiquinol-cytochrome c oxidoreductase, a multisubunit transmembrane complex that is part of the mitochondrial electron transport chain which drives oxidative phosphorylation. The respiratory chain contains 3 multisubunit complexes succinate dehydrogenase (complex II, CII), ubiquinol-cytochrome c oxidoreductase (cytochrome b-c1 complex, complex III, CIII) and cytochrome c oxidase (complex IV, CIV), that cooperate to transfer electrons derived from NADH and succinate to molecular oxygen, creating an electrochemical gradient over the inner membrane that drives transmembrane transport and the ATP synthase. The cytochrome b-c1 complex catalyzes electron transfer from ubiquinol to cytochrome c, linking this redox reaction to translocation of protons across the mitochondrial inner membrane, with protons being carried across the membrane as hydrogens on the quinol. In the process called Q cycle, 2 protons are consumed from the matrix, 4 protons are released into the intermembrane space and 2 electrons are passed to cytochrome c. The Rieske protein is a catalytic core subunit containing a [2Fe-2S] iron-sulfur cluster. It cycles between 2 conformational states during catalysis to transfer electrons from the quinol bound in the Q(0) site in cytochrome b to cytochrome c1. Incorporation of UQCRFS1 is the penultimate step in complex III assembly. In terms of biological role, component of the ubiquinol-cytochrome c oxidoreductase (cytochrome b-c1 complex, complex III, CIII). UQCRFS1 undergoes proteolytic processing once it is incorporated in the complex III dimer. One of the fragments, called subunit 9, corresponds to its mitochondrial targeting sequence (MTS). The proteolytic processing is necessary for the correct insertion of UQCRFS1 in the complex III dimer, but the persistence of UQCRFS1-derived fragments may prevent newly imported UQCRFS1 to be processed and assembled into complex III and is detrimental for the complex III structure and function. This is Cytochrome b-c1 complex subunit Rieske, mitochondrial (UQCRFS1) from Theropithecus gelada (Gelada baboon).